Consider the following 101-residue polypeptide: Large ribosomal subunit protein uL24 (101 aa).

It belongs to the universal ribosomal protein uL24 family. As to quaternary structure, part of the 50S ribosomal subunit.

Functionally, one of two assembly initiator proteins, it binds directly to the 5'-end of the 23S rRNA, where it nucleates assembly of the 50S subunit. In terms of biological role, one of the proteins that surrounds the polypeptide exit tunnel on the outside of the subunit. This Ligilactobacillus salivarius (strain UCC118) (Lactobacillus salivarius) protein is Large ribosomal subunit protein uL24.